We begin with the raw amino-acid sequence, 184 residues long: Glutathione-regulated potassium-efflux system ancillary protein KefG (184 aa).

The protein belongs to the NAD(P)H dehydrogenase (quinone) family. KefG subfamily. Interacts with KefB.

It is found in the cell inner membrane. It catalyses the reaction a quinone + NADH + H(+) = a quinol + NAD(+). The enzyme catalyses a quinone + NADPH + H(+) = a quinol + NADP(+). Functionally, regulatory subunit of a potassium efflux system that confers protection against electrophiles. Required for full activity of KefB. The polypeptide is Glutathione-regulated potassium-efflux system ancillary protein KefG (Escherichia coli O1:K1 / APEC).